The sequence spans 103 residues: MESDKMMPGGLTEARPATPEIQEIATTVKSQLEEKTNKTYEKFEAVEYKSQVVAGINYYIKVHVGGNSYVHIKVFKSLPYQNKPLELSGYQVDKTKDDELTGF.

Positions 51 to 55 match the Secondary area of contact motif; sequence QVVAG.

It belongs to the cystatin family.

It is found in the cytoplasm. This is an intracellular thiol proteinase inhibitor. This is Cystatin-A1 from Sus scrofa (Pig).